Consider the following 148-residue polypeptide: Cell division protein SepF (148 aa).

The segment at 1-59 (MNNKFKDFFGFGDNDSYEERDAYEEHYDEQEEMQNSNRPTNSRDSNVVSIKAGQAGSGP) is disordered. A compositionally biased stretch (polar residues) spans 33–48 (MQNSNRPTNSRDSNVV).

Belongs to the SepF family. As to quaternary structure, homodimer. Interacts with FtsZ.

It is found in the cytoplasm. Functionally, cell division protein that is part of the divisome complex and is recruited early to the Z-ring. Probably stimulates Z-ring formation, perhaps through the cross-linking of FtsZ protofilaments. Its function overlaps with FtsA. The protein is Cell division protein SepF of Lactobacillus delbrueckii subsp. bulgaricus (strain ATCC BAA-365 / Lb-18).